A 260-amino-acid polypeptide reads, in one-letter code: Proline-rich protein 33 (260 aa).

The interval 29–132 (GVQTVSPRPE…KVAPKPSRSG (104 aa)) is disordered. Residues 73–83 (GPSPYSPPPAA) show a composition bias toward pro residues.

The sequence is that of Proline-rich protein 33 (Prr33) from Mus musculus (Mouse).